We begin with the raw amino-acid sequence, 432 residues long: Trigger factor (432 aa).

One can recognise a PPIase FKBP-type domain in the interval Glu-161–Pro-246.

It belongs to the FKBP-type PPIase family. Tig subfamily.

It is found in the cytoplasm. The catalysed reaction is [protein]-peptidylproline (omega=180) = [protein]-peptidylproline (omega=0). Involved in protein export. Acts as a chaperone by maintaining the newly synthesized protein in an open conformation. Functions as a peptidyl-prolyl cis-trans isomerase. The sequence is that of Trigger factor from Cronobacter sakazakii (strain ATCC BAA-894) (Enterobacter sakazakii).